The following is a 500-amino-acid chain: UDP-GalNAc:beta-1,3-N-acetylgalactosaminyltransferase 2 (500 aa).

Over 1-6 the chain is Cytoplasmic; it reads MRNWLV. Residues 7–23 form a helical; Signal-anchor for type II membrane protein membrane-spanning segment; the sequence is LLCPCVLGAALHLWLRL. At 24–500 the chain is on the lumenal side; that stretch reads RSPPPACASG…CGDPCRCQAR (477 aa). N-linked (GlcNAc...) asparagine glycosylation is found at Asn-116 and Asn-174.

Belongs to the glycosyltransferase 31 family. In terms of processing, N-glycosylated. In terms of tissue distribution, expressed in all tissues examined, but at highest levels in testis, adipose tissue, skeletal muscle and ovary.

Its subcellular location is the golgi apparatus membrane. The protein localises to the endoplasmic reticulum. The enzyme catalyses 3-O-(N-acetyl-beta-D-glucosaminyl-(1-&gt;4)-alpha-D-mannosyl)-L-threonyl-[protein] + UDP-N-acetyl-alpha-D-galactosamine = 3-O-[beta-D-GalNAc-(1-&gt;3)-beta-D-GlcNAc-(1-&gt;4)-alpha-D-Man]-L-Thr-[protein] + UDP + H(+). It functions in the pathway protein modification; protein glycosylation. Its function is as follows. Beta-1,3-N-acetylgalactosaminyltransferase that synthesizes a unique carbohydrate structure, GalNAc-beta-1-3GlcNAc, on N- and O-glycans. Has no galactose nor galactosaminyl transferase activity toward any acceptor substrate. Involved in alpha-dystroglycan (DAG1) glycosylation: acts coordinately with GTDC2/POMGnT2 to synthesize a GalNAc-beta3-GlcNAc-beta-terminus at the 4-position of protein O-mannose in the biosynthesis of the phosphorylated O-mannosyl trisaccharide (N-acetylgalactosamine-beta-3-N-acetylglucosamine-beta-4-(phosphate-6-)mannose), a carbohydrate structure present in alpha-dystroglycan, which is required for binding laminin G-like domain-containing extracellular proteins with high affinity. The polypeptide is UDP-GalNAc:beta-1,3-N-acetylgalactosaminyltransferase 2 (B3GALNT2) (Homo sapiens (Human)).